The following is a 181-amino-acid chain: RNA pyrophosphohydrolase (181 aa).

The Nudix hydrolase domain maps to 6–149 (GFRPNVGIIL…KRRVYTRALQ (144 aa)). A Nudix box motif is present at residues 38-59 (GGIKAQETPEEALFRELEEEVG). Positions 159 to 181 (GLPRQPPVGRPRRSAPPRGCRRA) are disordered. Basic residues predominate over residues 168–181 (RPRRSAPPRGCRRA).

It belongs to the Nudix hydrolase family. RppH subfamily. The cofactor is a divalent metal cation.

Accelerates the degradation of transcripts by removing pyrophosphate from the 5'-end of triphosphorylated RNA, leading to a more labile monophosphorylated state that can stimulate subsequent ribonuclease cleavage. The protein is RNA pyrophosphohydrolase of Alkalilimnicola ehrlichii (strain ATCC BAA-1101 / DSM 17681 / MLHE-1).